Reading from the N-terminus, the 1409-residue chain is DNA-directed RNA polymerase subunit beta' (1409 aa).

Zn(2+)-binding residues include Cys70, Cys72, Cys85, and Cys88. Residues Asp458, Asp460, and Asp462 each coordinate Mg(2+). Positions 813, 887, 894, and 897 each coordinate Zn(2+). Low complexity predominate over residues 1385-1403 (EAAELAGSTSDVSTTADAS). The segment at 1385–1409 (EAAELAGSTSDVSTTADASEGAASE) is disordered.

This sequence belongs to the RNA polymerase beta' chain family. As to quaternary structure, the RNAP catalytic core consists of 2 alpha, 1 beta, 1 beta' and 1 omega subunit. When a sigma factor is associated with the core the holoenzyme is formed, which can initiate transcription. Mg(2+) serves as cofactor. It depends on Zn(2+) as a cofactor.

The enzyme catalyses RNA(n) + a ribonucleoside 5'-triphosphate = RNA(n+1) + diphosphate. Functionally, DNA-dependent RNA polymerase catalyzes the transcription of DNA into RNA using the four ribonucleoside triphosphates as substrates. The sequence is that of DNA-directed RNA polymerase subunit beta' from Variovorax paradoxus (strain S110).